The chain runs to 380 residues: uncharacterized protein (380 aa).

The stretch at 256–301 (DKEEKIQKSYQYQTELITELQGRIAELEKENQSLKENVKEPETSKP) forms a coiled coil.

This is an uncharacterized protein from Pasteurella multocida (strain Pm70).